The sequence spans 439 residues: CBL-interacting protein kinase 14 (439 aa).

The Protein kinase domain maps to 12-267 (YELGRLLGKG…IQKIKESTWF (256 aa)). Residues 18 to 26 (LGKGTFGKV) and K41 contribute to the ATP site. D135 serves as the catalytic Proton acceptor. The activation loop stretch occupies residues 153–182 (DFGLSALSESKRQDGLLHTTCGTPAYVAPE). In terms of domain architecture, NAF spans 298–333 (RKKNAHEDVKPMSVTNLNAFEIISFSKGFDLSGMFI). A PPI region spans residues 338–367 (RNEARFTSDKSASTIISKLEDVAKALNLRV).

It belongs to the protein kinase superfamily. CAMK Ser/Thr protein kinase family. SNF1 subfamily. Mn(2+) serves as cofactor.

The enzyme catalyses L-seryl-[protein] + ATP = O-phospho-L-seryl-[protein] + ADP + H(+). The catalysed reaction is L-threonyl-[protein] + ATP = O-phospho-L-threonyl-[protein] + ADP + H(+). CIPK serine-threonine protein kinases interact with CBL proteins. Binding of a CBL protein to the regulatory NAF domain of CIPK protein lead to the activation of the kinase in a calcium-dependent manner. The protein is CBL-interacting protein kinase 14 (CIPK14) of Oryza sativa subsp. japonica (Rice).